A 376-amino-acid chain; its full sequence is Carbamoyl phosphate synthase small chain (376 aa).

Residues 1–183 (MENILLNKAL…IYKKKYIEKN (183 aa)) are CPSase. The L-glutamine site is built by Ser-51, Gly-235, and Gly-237. A Glutamine amidotransferase type-1 domain is found at 187-374 (NIVAYDFGIK…INLVKDYRLN (188 aa)). Residue Cys-263 is the Nucleophile of the active site. L-glutamine contacts are provided by Leu-264, Gln-267, Asn-305, and Phe-308. Catalysis depends on residues His-347 and Glu-349.

Belongs to the CarA family. As to quaternary structure, composed of two chains; the small (or glutamine) chain promotes the hydrolysis of glutamine to ammonia, which is used by the large (or ammonia) chain to synthesize carbamoyl phosphate. Tetramer of heterodimers (alpha,beta)4.

The catalysed reaction is hydrogencarbonate + L-glutamine + 2 ATP + H2O = carbamoyl phosphate + L-glutamate + 2 ADP + phosphate + 2 H(+). It catalyses the reaction L-glutamine + H2O = L-glutamate + NH4(+). The protein operates within amino-acid biosynthesis; L-arginine biosynthesis; carbamoyl phosphate from bicarbonate: step 1/1. It functions in the pathway pyrimidine metabolism; UMP biosynthesis via de novo pathway; (S)-dihydroorotate from bicarbonate: step 1/3. In terms of biological role, small subunit of the glutamine-dependent carbamoyl phosphate synthetase (CPSase). CPSase catalyzes the formation of carbamoyl phosphate from the ammonia moiety of glutamine, carbonate, and phosphate donated by ATP, constituting the first step of 2 biosynthetic pathways, one leading to arginine and/or urea and the other to pyrimidine nucleotides. The small subunit (glutamine amidotransferase) binds and cleaves glutamine to supply the large subunit with the substrate ammonia. The chain is Carbamoyl phosphate synthase small chain from Wigglesworthia glossinidia brevipalpis.